A 383-amino-acid polypeptide reads, in one-letter code: Putative protein FAM157A (383 aa).

2 disordered regions span residues 1–21 (MGPLFTTIPGAHSGPMRPLPK) and 177–254 (ATAR…PLGR).

This sequence belongs to the FAM157 family.

This chain is Putative protein FAM157A (FAM157A), found in Homo sapiens (Human).